Reading from the N-terminus, the 103-residue chain is Small ribosomal subunit protein uS10 (103 aa).

This sequence belongs to the universal ribosomal protein uS10 family. Part of the 30S ribosomal subunit.

Involved in the binding of tRNA to the ribosomes. The sequence is that of Small ribosomal subunit protein uS10 from Pelodictyon phaeoclathratiforme (strain DSM 5477 / BU-1).